A 380-amino-acid polypeptide reads, in one-letter code: 3-isopropylmalate dehydratase large subunit 2 (380 aa).

The [4Fe-4S] cluster site is built by cysteine 262, cysteine 320, and cysteine 323.

The protein belongs to the aconitase/IPM isomerase family. LeuC type 2 subfamily. In terms of assembly, heterodimer of LeuC and LeuD. Requires [4Fe-4S] cluster as cofactor.

It catalyses the reaction (2R,3S)-3-isopropylmalate = (2S)-2-isopropylmalate. It participates in amino-acid biosynthesis; L-leucine biosynthesis; L-leucine from 3-methyl-2-oxobutanoate: step 2/4. In terms of biological role, catalyzes the isomerization between 2-isopropylmalate and 3-isopropylmalate, via the formation of 2-isopropylmaleate. The polypeptide is 3-isopropylmalate dehydratase large subunit 2 (Pyrococcus furiosus (strain ATCC 43587 / DSM 3638 / JCM 8422 / Vc1)).